Reading from the N-terminus, the 666-residue chain is DNA mismatch repair protein MutL (666 aa).

This sequence belongs to the DNA mismatch repair MutL/HexB family.

This protein is involved in the repair of mismatches in DNA. It is required for dam-dependent methyl-directed DNA mismatch repair. May act as a 'molecular matchmaker', a protein that promotes the formation of a stable complex between two or more DNA-binding proteins in an ATP-dependent manner without itself being part of a final effector complex. This Clostridium botulinum (strain Kyoto / Type A2) protein is DNA mismatch repair protein MutL.